We begin with the raw amino-acid sequence, 520 residues long: Probable kinase 098L (520 aa).

A Protein kinase domain is found at 82–393; the sequence is LTSVQSFGSK…NSPLLKKGFV (312 aa). ATP-binding positions include 88–96 and lysine 111; that span reads FGSKSKQGI. The active-site Proton acceptor is aspartate 205. Residues 416 to 442 adopt a coiled-coil conformation; the sequence is QTAQLIETDKEILDNLIDDLELKIVRK.

The protein belongs to the protein kinase superfamily.

In terms of biological role, probable kinase. This is Probable kinase 098L from Aedes vexans (Inland floodwater mosquito).